The chain runs to 569 residues: AA9 family lytic polysaccharide monooxygenase A (569 aa).

The N-terminal stretch at 1-16 is a signal peptide; it reads MRIFSLALGFLPLVAG. Positions 17 and 99 each coordinate Cu(2+). The cysteines at positions 59 and 189 are disulfide-linked. A glycan (N-linked (GlcNAc...) asparagine) is linked at N112. Positions 174 and 184 each coordinate O2. Y186 contacts Cu(2+). 2 N-linked (GlcNAc...) asparagine glycosylation sites follow: N244 and N381. Over residues 399 to 424 the composition is skewed to low complexity; that stretch reads AADATATATATTEDAEATTAAEAAAT. The segment at 399 to 439 is disordered; sequence AADATATATATTEDAEATTAAEAAATSGAGRPGRGHGHGRG. N-linked (GlcNAc...) asparagine glycosylation occurs at N472.

It belongs to the polysaccharide monooxygenase AA9 family. Cu(2+) is required as a cofactor.

The protein resides in the secreted. The catalysed reaction is [(1-&gt;4)-beta-D-glucosyl]n+m + reduced acceptor + O2 = 4-dehydro-beta-D-glucosyl-[(1-&gt;4)-beta-D-glucosyl]n-1 + [(1-&gt;4)-beta-D-glucosyl]m + acceptor + H2O.. Functionally, lytic polysaccharide monooxygenase (LPMO) that depolymerizes crystalline and amorphous polysaccharides via the oxidation of scissile alpha- or beta-(1-4)-glycosidic bonds, yielding C4 oxidation products. Catalysis by LPMOs requires the reduction of the active-site copper from Cu(II) to Cu(I) by a reducing agent and H(2)O(2) or O(2) as a cosubstrate. The chain is AA9 family lytic polysaccharide monooxygenase A from Emericella nidulans (strain FGSC A4 / ATCC 38163 / CBS 112.46 / NRRL 194 / M139) (Aspergillus nidulans).